Here is an 856-residue protein sequence, read N- to C-terminus: Leucine--tRNA ligase (856 aa).

The short motif at 42–52 (PYPSGKLHMGH) is the 'HIGH' region element. Residues 615–619 (KMSKS) carry the 'KMSKS' region motif. ATP is bound at residue lysine 618.

The protein belongs to the class-I aminoacyl-tRNA synthetase family.

It localises to the cytoplasm. It carries out the reaction tRNA(Leu) + L-leucine + ATP = L-leucyl-tRNA(Leu) + AMP + diphosphate. This chain is Leucine--tRNA ligase, found in Chromohalobacter salexigens (strain ATCC BAA-138 / DSM 3043 / CIP 106854 / NCIMB 13768 / 1H11).